The sequence spans 502 residues: Glutamate decarboxylase 1 (502 aa).

At Ser8 the chain carries Phosphoserine. Lys277 carries the post-translational modification N6-(pyridoxal phosphate)lysine. A calmodulin-binding region spans residues 469-502; it reads LMVTVKKSDIDKQRDIITGWKKFVADRKKTSGIC.

This sequence belongs to the group II decarboxylase family. As to quaternary structure, homohexamer. Interacts with calmodulin with a 1:3 stoichiometry. Requires pyridoxal 5'-phosphate as cofactor. As to expression, expressed in roots. Detected at low levels in shoots of young seedlings. Not detected in the root tips or in the central vascular bundle in the elongating region of mature roots.

The catalysed reaction is L-glutamate + H(+) = 4-aminobutanoate + CO2. Its activity is regulated as follows. Up-regulated by calmodulin binding at physiological pH. Functionally, catalyzes the conversion of glutamate to 4-aminobutanoate (GABA). The calmodulin-binding is calcium-dependent and it is proposed to directly or indirectly form a calcium regulated control of GABA biosynthesis. The protein is Glutamate decarboxylase 1 (GAD1) of Arabidopsis thaliana (Mouse-ear cress).